We begin with the raw amino-acid sequence, 1228 residues long: Myosin-1 (1228 aa).

A disordered region spans residues 1–27 (MAVTKRAGRRAQGGTQPAKGAQGVKKA). The Myosin motor domain maps to 37–716 (VGVSDLTLLS…TLFALEHMRD (680 aa)). Residue 130-137 (GESGAGKT) participates in ATP binding. A Phosphoserine modification is found at Ser358. Residues 405–487 (TIGILDIYGF…PGIFAALNDA (83 aa)) are actin-binding. IQ domains lie at 720 to 740 (HNMAARIQRAWRRYLAYKTEC) and 741 to 768 (AIKIQRFWRLKRGLDGLKEIQFRDSGHK). Residues 776-962 (RRTYSLIGYR…SGSVQVPPGA (187 aa)) form the TH1 domain. Disordered regions lie at residues 953 to 1040 (SGSV…AESA), 1053 to 1109 (QSLV…PAAP), and 1169 to 1228 (QGGA…DDDW). The segment covering 1053-1063 (QSLVNPRSGQG) has biased composition (polar residues). Positions 1064–1092 (QQQQQHHQAYQQPTAAQPAATSYSPAPAK) are enriched in low complexity. Residues 1093-1106 (AAPPPPPPAPPAAP) are compositionally biased toward pro residues. The region spanning 1109–1170 (PAEPTYKALY…PAAYLEEVQG (62 aa)) is the SH3 domain. The segment covering 1180 to 1194 (PTAGGASAGASLAEA) has biased composition (low complexity).

This sequence belongs to the TRAFAC class myosin-kinesin ATPase superfamily. Myosin family. Post-translationally, phosphorylation of the TEDS site (Ser-358) is required for the polarization of the actin cytoskeleton. Phosphorylation probably activates the myosin-I ATPase activity.

The protein localises to the cytoplasm. Its subcellular location is the cytoskeleton. The protein resides in the actin patch. In terms of biological role, type-I myosin implicated in the organization of the actin cytoskeleton. Required for proper actin cytoskeleton polarization. At the cell cortex, assembles in patch-like structures together with proteins from the actin-polymerizing machinery and promotes actin assembly. Functions as actin nucleation-promoting factor (NPF) for the Arp2/3 complex. This is Myosin-1 (MYO1) from Yarrowia lipolytica (strain CLIB 122 / E 150) (Yeast).